Consider the following 398-residue polypeptide: 2-epi-5-epi-valiolone synthase (398 aa).

Residues Asp62, Glu93 to Lys96, Gly126 to Asp130, Thr150 to Thr151, Lys163, Lys172, and Phe190 to Thr193 each bind NAD(+). The active site involves Lys163. A divalent metal cation is bound by residues Glu205, His276, and His292.

This sequence belongs to the sugar phosphate cyclases superfamily. EEVS family. NAD(+) serves as cofactor. It depends on Co(2+) as a cofactor.

It catalyses the reaction D-sedoheptulose 7-phosphate = 2-epi-5-epi-valiolone + phosphate. Functionally, catalyzes the cyclization of D-sedoheptulose 7-phosphate to 2-epi-5-epi-valiolone. Does not use ido-heptulose 7-phosphate and 3-deoxy-arabino-heptulosonate 7-phosphate. Involved in the biosynthesis of the acarviose moiety of the alpha-glucosidase inhibitor acarbose. The sequence is that of 2-epi-5-epi-valiolone synthase from Actinoplanes sp. (strain ATCC 31044 / CBS 674.73 / SE50/110).